The primary structure comprises 592 residues: A-type ATP synthase subunit A (592 aa).

Residue 233–240 (GPFGSGKT) participates in ATP binding.

This sequence belongs to the ATPase alpha/beta chains family. In terms of assembly, has multiple subunits with at least A(3), B(3), C, D, E, F, H, I and proteolipid K(x).

It localises to the cell membrane. The catalysed reaction is ATP + H2O + 4 H(+)(in) = ADP + phosphate + 5 H(+)(out). Its function is as follows. Component of the A-type ATP synthase that produces ATP from ADP in the presence of a proton gradient across the membrane. The A chain is the catalytic subunit. In Saccharolobus islandicus (strain Y.G.57.14 / Yellowstone #1) (Sulfolobus islandicus), this protein is A-type ATP synthase subunit A.